The chain runs to 142 residues: Protein archease (142 aa).

Ca(2+) contacts are provided by D12 and D141.

The protein belongs to the archease family.

In terms of biological role, activates the tRNA-splicing ligase complex by facilitating the enzymatic turnover of catalytic subunit RtcB. Acts by promoting the guanylylation of RtcB, a key intermediate step in tRNA ligation. Can also alter the NTP specificity of RtcB such that ATP, dGTP or ITP is used efficiently. The chain is Protein archease from Thermococcus kodakarensis (strain ATCC BAA-918 / JCM 12380 / KOD1) (Pyrococcus kodakaraensis (strain KOD1)).